The primary structure comprises 34 residues: Mu-conotoxin GS (34 aa).

3 cysteine pairs are disulfide-bonded: Cys-2–Cys-14, Cys-9–Cys-19, and Cys-13–Cys-27. 4-hydroxyproline is present on residues Pro-10 and Pro-11. A 4-carboxyglutamate modification is found at Glu-32.

Expressed by the venom duct.

Its subcellular location is the secreted. Functionally, mu-conotoxins block voltage-gated sodium channels (Nav). No effect was observed upon injections into mice and goldfish (25 ug). The chain is Mu-conotoxin GS from Conus geographus (Geography cone).